The chain runs to 359 residues: Guanine nucleotide-binding protein subunit alpha-11 (359 aa).

S-palmitoyl cysteine attachment occurs at residues cysteine 9 and cysteine 10. The 322-residue stretch at 38 to 359 folds into the G-alpha domain; it reads RELKLLLLGT…QLNLKEYNLV (322 aa). The segment at 41–54 is G1 motif; sequence KLLLLGTGESGKST. GTP-binding positions include 46-53 and 180-183; these read GTGESGKS and LRVR. Mg(2+) is bound at residue serine 53. The interval 178-186 is G2 motif; that stretch reads DVLRVRVPT. Residue threonine 186 participates in Mg(2+) binding. A G3 motif region spans residues 201 to 210; it reads FRMVDVGGQR. A G4 motif region spans residues 270–277; it reads ILFLNKKD. GTP is bound by residues 274 to 277 and alanine 331; that span reads NKKD. Residues 329–334 are G5 motif; the sequence is TCATDT.

It belongs to the G-alpha family. G(q) subfamily. As to quaternary structure, g proteins are composed of 3 units; alpha, beta and gamma. The alpha chain contains the guanine nucleotide binding site. Interacts with RGS22. Interacts with NTSR1.

It localises to the cell membrane. The protein resides in the cytoplasm. It catalyses the reaction GTP + H2O = GDP + phosphate + H(+). In terms of biological role, guanine nucleotide-binding proteins (G proteins) function as transducers downstream of G protein-coupled receptors (GPCRs) in numerous signaling cascades. The alpha chain contains the guanine nucleotide binding site and alternates between an active, GTP-bound state and an inactive, GDP-bound state. Signaling by an activated GPCR promotes GDP release and GTP binding. The alpha subunit has a low GTPase activity that converts bound GTP to GDP, thereby terminating the signal. Both GDP release and GTP hydrolysis are modulated by numerous regulatory proteins. Signaling is mediated via phospholipase C-beta-dependent inositol lipid hydrolysis for signal propagation: activates phospholipase C-beta: following GPCR activation, GNA11 activates PLC-beta (PLCB1, PLCB2, PLCB3 or PLCB4), leading to production of diacylglycerol (DAG) and inositol 1,4,5-trisphosphate (IP3). Transduces FFAR4 signaling in response to long-chain fatty acids (LCFAs). Together with GNAQ, required for heart development. In the respiratory epithelium, transmits OXGR1-dependent signals that lead to downstream intracellular Ca(2+) release and mucocilliary clearance of airborne pathogens. The chain is Guanine nucleotide-binding protein subunit alpha-11 (GNA11) from Bos taurus (Bovine).